We begin with the raw amino-acid sequence, 349 residues long: Interferon-stimulated 20 kDa exonuclease-like 2 (349 aa).

Disordered stretches follow at residues Met-1–Pro-100 and Ala-126–Gly-166. Residues Pro-14 to Ala-23 show a composition bias toward basic and acidic residues. A compositionally biased stretch (basic residues) spans Lys-24–Pro-47. Over residues Leu-54–Arg-66 the composition is skewed to basic and acidic residues. Residues Thr-70–Ser-87 show a composition bias toward low complexity. The segment covering Ile-130 to Ser-142 has biased composition (basic residues). One can recognise an Exonuclease domain in the interval Met-175 to Tyr-331.

The protein localises to the nucleus. It localises to the nucleolus. 3'-&gt; 5'-exoribonuclease involved in ribosome biogenesis in the processing of the 12S pre-rRNA. Displays a strong specificity for a 3'-end containing a free hydroxyl group. This is Interferon-stimulated 20 kDa exonuclease-like 2 (ISG20L2) from Bos taurus (Bovine).